Reading from the N-terminus, the 931-residue chain is Ribosome-releasing factor 2, mitochondrial (931 aa).

One can recognise a tr-type G domain in the interval 63–379 (EKTRNIGIIA…AVNNLLPGPS (317 aa)). GTP is bound by residues 72–79 (AHIDAGKT), 162–166 (DTPGH), and 216–219 (NKLD).

It belongs to the TRAFAC class translation factor GTPase superfamily. Classic translation factor GTPase family. EF-G/EF-2 subfamily.

The protein localises to the mitochondrion. In terms of biological role, mitochondrial GTPase that mediates the disassembly of ribosomes from messenger RNA at the termination of mitochondrial protein biosynthesis. Not involved in the GTP-dependent ribosomal translocation step during translation elongation. This Talaromyces stipitatus (strain ATCC 10500 / CBS 375.48 / QM 6759 / NRRL 1006) (Penicillium stipitatum) protein is Ribosome-releasing factor 2, mitochondrial (mef2).